The following is a 1119-amino-acid chain: DISARM protein DrmA (1119 aa).

The interval 73-95 (PESGMEEDVEQQRNSELEQEAEE) is disordered. Residues 813–986 (ELSKYIDPYR…ATPYASRARD (174 aa)) form the Helicase C-terminal domain.

The protein belongs to the helicase family.

It localises to the cytoplasm. Component of antiviral defense system DISARM (defense island system associated with restriction-modification), composed of DrmE, DrmA, DrmB, DrmC and DrmMII. DISARM is probably a multi-gene restriction module, this subunit is probably a helicase. Expression of DISARM in B.subtilis (strain BEST7003) confers resistance to phages Nf, phi29, phi105, phi3T, SPO1, SPR and SPP1. Protection is over 10(7)-fold against phi3T, 10(4)-10(5)-fold against Nf, phi29, phi105 and SPR, 100-fold against SPO1 and 10-fold against SPP1. DISARM does not interfere with phage adsorption, but instead interferes with (phi3T) DNA replication early in its cycle, preventing replication, circularization and lysogeny and probably causes phage DNA degradation (DNA is degraded in SPP1-infected cells). The protein is DISARM protein DrmA of Bacillus paralicheniformis (strain ATCC 9945a / NCIMB 11709 / CD-2).